Consider the following 432-residue polypeptide: Serine--tRNA ligase (432 aa).

230 to 232 provides a ligand contact to L-serine; sequence TAE. 261 to 263 serves as a coordination point for ATP; it reads RSE. Glu-284 provides a ligand contact to L-serine. 348 to 351 provides a ligand contact to ATP; that stretch reads EVSS. L-serine is bound at residue Ser-383.

It belongs to the class-II aminoacyl-tRNA synthetase family. Type-1 seryl-tRNA synthetase subfamily. As to quaternary structure, homodimer. The tRNA molecule binds across the dimer.

It is found in the cytoplasm. It catalyses the reaction tRNA(Ser) + L-serine + ATP = L-seryl-tRNA(Ser) + AMP + diphosphate + H(+). It carries out the reaction tRNA(Sec) + L-serine + ATP = L-seryl-tRNA(Sec) + AMP + diphosphate + H(+). Its pathway is aminoacyl-tRNA biosynthesis; selenocysteinyl-tRNA(Sec) biosynthesis; L-seryl-tRNA(Sec) from L-serine and tRNA(Sec): step 1/1. Its function is as follows. Catalyzes the attachment of serine to tRNA(Ser). Is also able to aminoacylate tRNA(Sec) with serine, to form the misacylated tRNA L-seryl-tRNA(Sec), which will be further converted into selenocysteinyl-tRNA(Sec). This is Serine--tRNA ligase from Limosilactobacillus fermentum (strain NBRC 3956 / LMG 18251) (Lactobacillus fermentum).